A 418-amino-acid chain; its full sequence is Serine protease inhibitor A3K (418 aa).

The signal sequence occupies residues 1–21; that stretch reads MAFIVAMGMILMAGICPAVLC. 4 N-linked (GlcNAc...) asparagine glycosylation sites follow: Asn39, Asn105, Asn185, and Asn270. An RCL region spans residues 369–394; the sequence is GTEAAAATGVIGGIRKAILPAVHFNR.

This sequence belongs to the serpin family. As to expression, expressed in liver and secreted in plasma.

The protein resides in the secreted. Contrapsin inhibits trypsin-like proteases. The polypeptide is Serine protease inhibitor A3K (Serpina3k) (Mus musculus (Mouse)).